Reading from the N-terminus, the 663-residue chain is UvrABC system protein B (663 aa).

Residues 30-417 (EGIKAGKRHQ…TDKMVEQIIR (388 aa)) form the Helicase ATP-binding domain. 43-50 (GATGTGKT) is an ATP binding site. Positions 96–119 (YYDYYQPEAYVPSTDTFIEKDASI) match the Beta-hairpin motif. In terms of domain architecture, Helicase C-terminal spans 434–600 (QIDDLLSEIQ…TINKKIHDLI (167 aa)). Residues 627–662 (QKTIDNIEKEMKQAAKDLDFEKATELRDMLFELKAE) enclose the UVR domain.

The protein belongs to the UvrB family. Forms a heterotetramer with UvrA during the search for lesions. Interacts with UvrC in an incision complex.

It localises to the cytoplasm. Functionally, the UvrABC repair system catalyzes the recognition and processing of DNA lesions. A damage recognition complex composed of 2 UvrA and 2 UvrB subunits scans DNA for abnormalities. Upon binding of the UvrA(2)B(2) complex to a putative damaged site, the DNA wraps around one UvrB monomer. DNA wrap is dependent on ATP binding by UvrB and probably causes local melting of the DNA helix, facilitating insertion of UvrB beta-hairpin between the DNA strands. Then UvrB probes one DNA strand for the presence of a lesion. If a lesion is found the UvrA subunits dissociate and the UvrB-DNA preincision complex is formed. This complex is subsequently bound by UvrC and the second UvrB is released. If no lesion is found, the DNA wraps around the other UvrB subunit that will check the other stand for damage. This chain is UvrABC system protein B, found in Staphylococcus aureus (strain COL).